A 280-amino-acid chain; its full sequence is MSINLQNVSYTYQAGTPFEGRALFNINLDILDGSYTAFIGHTGSGKSTIMQLLNGLHVPTTGIVSVDKQDITNHSKNKEIKSIRKHVGLVFQFPESQLFEETVLKDVAFGPQNFGVSPEEAEALAREKLALVGISENLFEKNPFELSGGQMRRVAIAGILAMQPKVLVLDEPTAGLDPKGRKELMTIFKKLHQSGMTIVLVTHLMDDVANYADFVYVLDKGKIILSGKPKTIFQQVSLLEKKQLGVPKVTKLAQRLVDRGIPISSLPITLEELREVLKHG.

One can recognise an ABC transporter domain in the interval 3–245 (INLQNVSYTY…VSLLEKKQLG (243 aa)). 40-47 (GHTGSGKS) lines the ATP pocket.

The protein belongs to the ABC transporter superfamily. Energy-coupling factor EcfA family. Forms a stable energy-coupling factor (ECF) transporter complex composed of 2 membrane-embedded substrate-binding proteins (S component), 2 ATP-binding proteins (A component) and 2 transmembrane proteins (T component).

It localises to the cell membrane. Functionally, ATP-binding (A) component of a common energy-coupling factor (ECF) ABC-transporter complex. Unlike classic ABC transporters this ECF transporter provides the energy necessary to transport a number of different substrates. The polypeptide is Energy-coupling factor transporter ATP-binding protein EcfA2 (Streptococcus pyogenes serotype M1).